We begin with the raw amino-acid sequence, 86 residues long: Kappa-theraphotoxin-Cg1a 6 (86 aa).

The signal sequence occupies residues 1–21 (MKVSVLITLAVLGVMFVWASA). Positions 22–50 (AELEERGSDQRDSPAWLKSMERIFQSEER) are excised as a propeptide. Disulfide bonds link Cys-52/Cys-66, Cys-59/Cys-71, and Cys-65/Cys-78. Phe-84 is modified (phenylalanine amide).

It belongs to the neurotoxin 10 (Hwtx-1) family. 28 (Jztx-11) subfamily. As to expression, expressed by the venom gland.

The protein resides in the secreted. Its function is as follows. This toxin acts as a voltage-dependent gating-modifier. It inhibits the sodium conductance (IC(50)=124 nM) and slows the fast inactivation (EC(50)=1180 nM) of Nav1.5/SCN5A. It significantly shifts the activation to more depolarized voltages and decreases the deactivation of Nav1.5 currents upon extreme depolarization, but only slightly affects voltage-dependence of steady-state inactivation. In addition, this toxin causes an approximately five-fold decrease in the rate of recovery from inactivation and an approximately 1.9-fold reduction in the closed-state inactivation rate. This toxin integrates the functions of site 3 toxins (alpha-scorpion toxins) with site 4 toxins (beta-scorpion and spider toxins) by targeting multiple sites on Nav1.5. Also shows inhibition of voltage-gated potassium channels (5 uM completely inhibits Kv2.1/KCNB1, whereas 5 uM moderately inhibits Kv4.2/KCND2 Kv4.1/KCND1 channels). In Chilobrachys guangxiensis (Chinese earth tiger tarantula), this protein is Kappa-theraphotoxin-Cg1a 6.